Here is a 311-residue protein sequence, read N- to C-terminus: Homeobox protein CDX-2 (311 aa).

Ser-60 bears the Phosphoserine mark. Positions 111 to 151 (EYHAHHHPHHHPHHPAASPSCASGLLQTLNLGPPGPAATAA) are disordered. Positions 114 to 124 (AHHHPHHHPHH) are enriched in basic residues. The interaction with DNA stretch occupies residues 185–215 (KDKYRVVYTDHQRLELEKEFHFSRYITIRRK). The homeobox DNA-binding region spans 185-244 (KDKYRVVYTDHQRLELEKEFHFSRYITIRRKSELAATLGLSERQVKIWFQNRRAKERKIK). The tract at residues 227 to 241 (RQVKIWFQNRRAKER) is interaction with 5-mCpG DNA. The segment at 239–311 (KERKIKKKQQ…GGVLNSTVTQ (73 aa)) is disordered. The segment covering 248–257 (QQQQQQQQQQ) has biased composition (low complexity). The segment covering 258–268 (PPQPPPQPSQP) has biased composition (pro residues). Ser-281 is subject to Phosphoserine; by CDK2. The short motif at 281–293 (SPVTSLQGSVPGS) is the 4S motif; modulates transactivation activity and protein stability element. Positions 285–298 (SLQGSVPGSVPGVL) are enriched in low complexity.

Belongs to the Caudal homeobox family. Can bind DNA as a monomer or homodimer. Post-translationally, ubiquitinated, leading to its degradation by the proteasome. Phosphorylation at Ser-60 reduces transactivation capacity. Phosphorylation at Ser-281 reduces transactivation capacity and increases ubiquitin-dependent proteasome degradation. As to expression, in the intestine, detected in ileum and proximal and distal colon (at protein level). In adult small intestine, predominantly localized in crypt and lower villus cells of the epithelium (at protein level). Expressed in the intestine but not detected in other tissues including stomach, liver, kidney, spleen, brain, heart, lung, pancreas, skeletal muscle and testis. Expressed specifically in gut epithelium where it is not restricted to a particular cell lineage. Abundant expression is seen in the proximal colon with slightly lower levels in distal colon. Expression in the proximal colon is not restricted either to a particular cell lineage or stage of differentiation while in the distal colon it is more abundant in the differentiated cells towards the top of the crypt.

The protein localises to the nucleus. Its function is as follows. Transcription factor which regulates the transcription of multiple genes expressed in the intestinal epithelium. Binds to the promoter of the intestinal sucrase-isomaltase SI and activates SI transcription. Binds to the DNA sequence 5'-ATAAAAACTTAT-3' in the promoter region of VDR and activates VDR transcription. Binds to and activates transcription of LPH. Activates transcription of CLDN2 and intestinal mucin MUC2. Binds to the 5'-AATTTTTTACAACACCT-3' DNA sequence in the promoter region of CA1 and activates CA1 transcription. Important in broad range of functions from early differentiation to maintenance of the intestinal epithelial lining of both the small and large intestine. Binds preferentially to methylated DNA. The sequence is that of Homeobox protein CDX-2 (Cdx2) from Mus musculus (Mouse).